The sequence spans 1235 residues: DNA polymerase catalytic subunit (1235 aa).

2 disordered regions span residues 640 to 691 and 1098 to 1134; these read QGRF…ETAG and AAAPGDEPAPPAALPSPAKRPRETPSPADPPGGASKP. Basic and acidic residues predominate over residues 650 to 661; the sequence is APKRPAAAREDE. Over residues 662–675 the composition is skewed to acidic residues; sequence ERPEEEGEDEDERE. Over residues 676–691 the composition is skewed to basic and acidic residues; sequence EGGGEREPDGARETAG.

It belongs to the DNA polymerase type-B family. Forms a complex with the ssDNA-binding protein UL29, the DNA polymerase processivity factor, and the alkaline exonuclease. Interacts with the putative helicase-primase complex subunit UL8; this interaction may coordinate leading and lagging strand DNA synthesis at the replication fork.

The protein localises to the host nucleus. The catalysed reaction is DNA(n) + a 2'-deoxyribonucleoside 5'-triphosphate = DNA(n+1) + diphosphate. It carries out the reaction Endonucleolytic cleavage to 5'-phosphomonoester.. Replicates viral genomic DNA. The replication complex is composed of six viral proteins: the DNA polymerase, processivity factor, primase, primase-associated factor, helicase, and ssDNA-binding protein. Additionally, the polymerase contains an intrinsic ribonuclease H (RNase H) activity that specifically degrades RNA/DNA heteroduplexes or duplex DNA substrates in the 5' to 3' direction. Therefore, it can catalyze the excision of the RNA primers that initiate the synthesis of Okazaki fragments at a replication fork during viral DNA replication. The sequence is that of DNA polymerase catalytic subunit from Homo sapiens (Human).